Here is a 486-residue protein sequence, read N- to C-terminus: Cardiolipin synthase A (486 aa).

2 consecutive transmembrane segments (helical) span residues 3-23 and 38-58; these read IFYN…IANI and MSWL…WFFF. PLD phosphodiesterase domains lie at 219–246 and 399–426; these read VDVR…VDPY and QKGL…DMRS. Residues His224, Lys226, Asp231, His404, Lys406, and Asp411 contribute to the active site.

This sequence belongs to the phospholipase D family. Cardiolipin synthase subfamily. ClsA sub-subfamily.

The protein localises to the cell inner membrane. The catalysed reaction is 2 a 1,2-diacyl-sn-glycero-3-phospho-(1'-sn-glycerol) = a cardiolipin + glycerol. Its function is as follows. Catalyzes the reversible phosphatidyl group transfer from one phosphatidylglycerol molecule to another to form cardiolipin (CL) (diphosphatidylglycerol) and glycerol. This chain is Cardiolipin synthase A, found in Buchnera aphidicola subsp. Acyrthosiphon pisum (strain APS) (Acyrthosiphon pisum symbiotic bacterium).